A 206-amino-acid polypeptide reads, in one-letter code: MASSNFLVLLLFALFAIPQGLANYEKPPVYQPPVYKPPVEKPPVYKPPVEKPPVYKPPVEKPPVYKPPVYKPPVYKPPVVKPPVYKPPVYKPPVYKPPVYKPPVEKPPVYKPPVYKPPVVKPPVYKPPVYKPPVEKPPVYKPPVVKPPVYKPPVYKPPVVKPPVYKPPVYKPPVYKPPVEKPPVYKPPVYKPPVEKPPVYGPPHHP.

An N-terminal signal peptide occupies residues Met-1–Ala-22. 33 consecutive repeat copies span residues Pro-32 to Lys-36, Pro-37 to Lys-41, Pro-42 to Lys-46, Pro-47 to Lys-51, Pro-52 to Lys-56, Pro-57 to Lys-61, Pro-62 to Lys-66, Pro-67 to Lys-71, Pro-72 to Lys-76, Pro-77 to Lys-81, Pro-82 to Lys-86, Pro-87 to Lys-91, Pro-92 to Lys-96, Pro-97 to Lys-101, Pro-102 to Lys-106, Pro-107 to Lys-111, Pro-112 to Lys-116, Pro-117 to Lys-121, Pro-122 to Lys-126, Pro-127 to Lys-131, Pro-132 to Lys-136, Pro-137 to Lys-141, Pro-142 to Lys-146, Pro-147 to Lys-151, Pro-152 to Lys-156, Pro-157 to Lys-161, Pro-162 to Lys-166, Pro-167 to Lys-171, Pro-172 to Lys-176, Pro-177 to Lys-181, Pro-182 to Lys-186, Pro-187 to Lys-191, and Pro-192 to Lys-196. The segment at Pro-32–Gly-201 is 34 X 5 AA approximate tandem repeats of P-P-V-[EVY]-K. The disordered stretch occupies residues Lys-51 to Val-84. Residues Pro-132 to Pro-206 form a disordered region. Residues Pro-197–Gly-201 form a 34; approximate repeat.

It belongs to the plant proline-rich protein superfamily. ENOD12 family. Expressed in hypocotyls, roots and mature root nodules.

The protein resides in the secreted. It localises to the cell wall. In terms of biological role, this is a developmentally regulated putative cell wall protein. In Medicago truncatula (Barrel medic), this protein is Repetitive proline-rich cell wall protein 1 (PRP1).